The chain runs to 425 residues: Adenylosuccinate synthetase (425 aa).

GTP-binding positions include 12–18 (GDEGKGK) and 40–42 (GHT). Catalysis depends on Asp13, which acts as the Proton acceptor. Mg(2+) contacts are provided by Asp13 and Gly40. IMP contacts are provided by residues 13–16 (DEGK), 38–41 (NAGH), Thr127, Arg141, Gln222, Thr237, and Arg301. Residue His41 is the Proton donor of the active site. 297 to 303 (AVTGRPR) provides a ligand contact to substrate. GTP contacts are provided by residues Arg303, 329 to 331 (KID), and 411 to 413 (SVG).

This sequence belongs to the adenylosuccinate synthetase family. As to quaternary structure, homodimer. Mg(2+) is required as a cofactor.

Its subcellular location is the cytoplasm. It carries out the reaction IMP + L-aspartate + GTP = N(6)-(1,2-dicarboxyethyl)-AMP + GDP + phosphate + 2 H(+). It functions in the pathway purine metabolism; AMP biosynthesis via de novo pathway; AMP from IMP: step 1/2. Plays an important role in the de novo pathway of purine nucleotide biosynthesis. Catalyzes the first committed step in the biosynthesis of AMP from IMP. This Fusobacterium nucleatum subsp. nucleatum (strain ATCC 25586 / DSM 15643 / BCRC 10681 / CIP 101130 / JCM 8532 / KCTC 2640 / LMG 13131 / VPI 4355) protein is Adenylosuccinate synthetase.